The sequence spans 158 residues: ATP synthase subunit b' (158 aa).

The chain crosses the membrane as a helical span at residues Ala24 to Phe44.

Belongs to the ATPase B chain family. As to quaternary structure, F-type ATPases have 2 components, F(1) - the catalytic core - and F(0) - the membrane proton channel. F(1) has five subunits: alpha(3), beta(3), gamma(1), delta(1), epsilon(1). F(0) has four main subunits: a(1), b(1), b'(1) and c(10-14). The alpha and beta chains form an alternating ring which encloses part of the gamma chain. F(1) is attached to F(0) by a central stalk formed by the gamma and epsilon chains, while a peripheral stalk is formed by the delta, b and b' chains.

The protein localises to the cellular thylakoid membrane. Functionally, f(1)F(0) ATP synthase produces ATP from ADP in the presence of a proton or sodium gradient. F-type ATPases consist of two structural domains, F(1) containing the extramembraneous catalytic core and F(0) containing the membrane proton channel, linked together by a central stalk and a peripheral stalk. During catalysis, ATP synthesis in the catalytic domain of F(1) is coupled via a rotary mechanism of the central stalk subunits to proton translocation. Component of the F(0) channel, it forms part of the peripheral stalk, linking F(1) to F(0). The b'-subunit is a diverged and duplicated form of b found in plants and photosynthetic bacteria. This Synechococcus elongatus (strain ATCC 33912 / PCC 7942 / FACHB-805) (Anacystis nidulans R2) protein is ATP synthase subunit b'.